The sequence spans 631 residues: Guanylate-binding protein 4 (631 aa).

One can recognise a GB1/RHD3-type G domain in the interval Ser33 to Lys283. Residues Gly43–Ser50 and Asp103–Leu107 each bind GTP. Positions Ile492–Asn592 form a coiled coil.

It belongs to the TRAFAC class dynamin-like GTPase superfamily. GB1/RHD3 GTPase family. GB1 subfamily. Heterodimer with other family members, including GBP1, GBP2 and GBP5. Dimerization regulates subcellular location. Interacts with IRF7; preventing interaction between TRAF6 and IRF7, resulting in impaired TRAF6-mediated IRF7 ubiquitination. As to expression, mainly expressed in organs of the immune system, such as spleen and lymph nodes.

It localises to the golgi apparatus membrane. It is found in the cytoplasm. The protein resides in the nucleus. Its subcellular location is the perinuclear region. The catalysed reaction is GTP + H2O = GDP + phosphate + H(+). In terms of biological role, interferon (IFN)-inducible GTPase that plays important roles in innate immunity against a diverse range of bacterial, viral and protozoan pathogens. Negatively regulates the antiviral response by inhibiting activation of IRF7 transcription factor. This is Guanylate-binding protein 4 from Mus musculus (Mouse).